A 695-amino-acid polypeptide reads, in one-letter code: MAP kinase phosphatase with leucine-rich repeats protein 2 (695 aa).

LRR repeat units follow at residues 101–122, 124–145, 147–167, 170–191, 193–214, 215–235, 239–260, 262–283, 286–307, and 309–330; these read SLKSLILDFNKITEIPDCITLL, NLNHLSLAANQLTHVPEFLSQL, SLETFEIGINQFTCFPLNVCK, SLTSLHLETNNIKSLPEEFLNL, NLKDLSLFDNQLKEIPDSLPNN, IEKLNLGCNDISSSKSDSLIR, SLTTLNLSENKIEELDESLSCL, NVKTLMLDCNMIKVIPGSVLGS, SLVTLNLPHNLISDLPPEVILL, and NLRIIDLRGNNFENCKKLIPTE. Positions 413–426 are enriched in low complexity; the sequence is SENNEINENNQLLT. Disordered stretches follow at residues 413–438 and 492–519; these read SENNEINENNQLLTTDDDYNTDKNDS and QEQLPQSKPENEKLTNIPEQQQKQQQQQ. In terms of domain architecture, Tyrosine-protein phosphatase spans 556-695; sequence VPDLIIDKLY…LKKFEKDLFK (140 aa). C639 (phosphocysteine intermediate) is an active-site residue.

This sequence belongs to the protein-tyrosine phosphatase family. Non-receptor class dual specificity subfamily.

The catalysed reaction is O-phospho-L-tyrosyl-[protein] + H2O = L-tyrosyl-[protein] + phosphate. The enzyme catalyses O-phospho-L-seryl-[protein] + H2O = L-seryl-[protein] + phosphate. It carries out the reaction O-phospho-L-threonyl-[protein] + H2O = L-threonyl-[protein] + phosphate. In terms of biological role, probable phosphatase with dual specificity toward Ser/Thr and Tyr-containing proteins. In Dictyostelium discoideum (Social amoeba), this protein is MAP kinase phosphatase with leucine-rich repeats protein 2 (mpl2).